Reading from the N-terminus, the 410-residue chain is Cysteine desulfurase IscS (410 aa).

Residues A80–T81, N160, Q188, and S208–H210 contribute to the pyridoxal 5'-phosphate site. An N6-(pyridoxal phosphate)lysine modification is found at K211. T248 is a binding site for pyridoxal 5'-phosphate. Catalysis depends on C334, which acts as the Cysteine persulfide intermediate. C334 serves as a coordination point for [2Fe-2S] cluster.

This sequence belongs to the class-V pyridoxal-phosphate-dependent aminotransferase family. NifS/IscS subfamily. In terms of assembly, homodimer. Forms a heterotetramer with IscU, interacts with other sulfur acceptors. Pyridoxal 5'-phosphate is required as a cofactor.

It is found in the cytoplasm. It catalyses the reaction (sulfur carrier)-H + L-cysteine = (sulfur carrier)-SH + L-alanine. It participates in cofactor biosynthesis; iron-sulfur cluster biosynthesis. In terms of biological role, master enzyme that delivers sulfur to a number of partners involved in Fe-S cluster assembly, tRNA modification or cofactor biosynthesis. Catalyzes the removal of elemental sulfur atoms from cysteine to produce alanine. Functions as a sulfur delivery protein for Fe-S cluster synthesis onto IscU, an Fe-S scaffold assembly protein, as well as other S acceptor proteins. This chain is Cysteine desulfurase IscS, found in Rickettsia felis (strain ATCC VR-1525 / URRWXCal2) (Rickettsia azadi).